Reading from the N-terminus, the 557-residue chain is Leucine-rich glioma-inactivated protein 1 (557 aa).

The signal sequence occupies residues 1–34 (MESESIRRMGNACIPLKRIAYFLCLFSVVLLTEG). The LRRNT domain occupies 35-72 (KKPAKPKCPAVCTCSKDNALCENARSIPRTVPPDVISL). LRR repeat units follow at residues 92–113 (SLQLLLFTSNSFDVISDDAFIG), 116–137 (HLEYLFIENNNIKSISRHTFRG), and 140–161 (SLIHLSLANNNLQTLPKDIFKG). The LRRCT domain maps to 173-223 (NSFNCDCKLKWLVEWLGHTNATVEDIYCEGPPEYKKRKINSLSPKDFDCII). An N-linked (GlcNAc...) asparagine glycan is attached at N192. EAR repeat units follow at residues 225 to 267 (EFAK…EWDH), 271 to 313 (TFRN…KRDG), 317 to 364 (KFIK…KWNG), 366 to 415 (GFYS…QWSK), 419 to 462 (LFIN…KWGG), 464 to 506 (SFQD…NWDA), and 510 to 552 (KFVK…KHVI). N277 carries N-linked (GlcNAc...) asparagine glycosylation. Residue N422 is glycosylated (N-linked (GlcNAc...) asparagine).

As to quaternary structure, oligomer. Interacts with KCNA1 within a complex containing KCNA1, KCNA4 and KCNAB1. Can bind to ADAM11 and ADAM23. Part of a complex containing ADAM22, DLG4/PSD95 and CACNG2 (stargazin). Glycosylated. In terms of tissue distribution, expressed in brain. High levels found in hippocampus, thalamic nuclei, neocortex, and molecular and granule cell layers of the cerebellum.

The protein localises to the secreted. Its subcellular location is the synapse. It is found in the cytoplasm. Plays a role in suppressing the production of MMP1/3 through the phosphatidylinositol 3-kinase/ERK pathway. Regulates voltage-gated potassium channels assembled from KCNA1, KCNA4 and KCNAB1. It slows down channel inactivation by precluding channel closure mediated by the KCNAB1 subunit. Ligand for ADAM22 that positively regulates synaptic transmission mediated by AMPA-type glutamate receptors. The polypeptide is Leucine-rich glioma-inactivated protein 1 (Lgi1) (Rattus norvegicus (Rat)).